Consider the following 61-residue polypeptide: Potassium channel toxin alpha-KTx 5.3 (61 aa).

Positions 1–28 are cleaved as a signal peptide; it reads MHNYYKIVLIMVAFFAVIITFSNIQVEG. Disulfide bonds link C31–C49, C36–C54, and C40–C56. The [R/K]XCQ motif stretch occupies residues 34–37; the sequence is KRCQ. At H59 the chain carries Histidine amide.

This sequence belongs to the short scorpion toxin superfamily. Potassium channel inhibitor family. Alpha-KTx 05 subfamily. As to expression, expressed by the venom gland.

It localises to the secreted. Blocks small conductance calcium-activated potassium channels (KCNN, SK). Has also been shown to weakly inhibit Kv11.1/KCNH2/ERG1, Kv1.2/KCNA2, Kv1.3/KCNA3 and Kv2.1/KCNB1 voltage-gated potassium channels. The polypeptide is Potassium channel toxin alpha-KTx 5.3 (Olivierus martensii (Manchurian scorpion)).